The primary structure comprises 448 residues: tRNA modification GTPase MnmE (448 aa).

(6S)-5-formyl-5,6,7,8-tetrahydrofolate contacts are provided by arginine 22, glutamate 83, and arginine 122. Positions glycine 219–lysine 369 constitute a TrmE-type G domain. K(+) is bound at residue asparagine 229. Residues asparagine 229–serine 234, serine 248–threonine 254, and aspartate 273–glycine 276 each bind GTP. Serine 233 provides a ligand contact to Mg(2+). K(+) is bound by residues serine 248, isoleucine 250, and threonine 253. Threonine 254 contributes to the Mg(2+) binding site. Lysine 448 provides a ligand contact to (6S)-5-formyl-5,6,7,8-tetrahydrofolate.

Belongs to the TRAFAC class TrmE-Era-EngA-EngB-Septin-like GTPase superfamily. TrmE GTPase family. As to quaternary structure, homodimer. Heterotetramer of two MnmE and two MnmG subunits. K(+) is required as a cofactor.

It localises to the cytoplasm. Functionally, exhibits a very high intrinsic GTPase hydrolysis rate. Involved in the addition of a carboxymethylaminomethyl (cmnm) group at the wobble position (U34) of certain tRNAs, forming tRNA-cmnm(5)s(2)U34. The sequence is that of tRNA modification GTPase MnmE from Acholeplasma laidlawii (strain PG-8A).